The chain runs to 383 residues: Large ribosomal subunit protein uL3 (383 aa).

This sequence belongs to the universal ribosomal protein uL3 family.

It is found in the cytoplasm. The sequence is that of Large ribosomal subunit protein uL3 (RPL3-1) from Encephalitozoon cuniculi (strain GB-M1) (Microsporidian parasite).